Consider the following 190-residue polypeptide: Frataxin homolog, mitochondrial (190 aa).

This sequence belongs to the frataxin family. In terms of assembly, monomer (probable predominant form). Oligomer. Interacts with IscU. Component of the mitochondrial core iron-sulfur cluster (ISC) assembly complex at least composed of the cysteine desulfurase Nfs1, the scaffold protein IscU, the accessory protein bcn92/Isd11/Lyrm4, and probably fh/frataxin.

It localises to the mitochondrion. It catalyses the reaction 4 Fe(2+) + O2 + 4 H(+) = 4 Fe(3+) + 2 H2O. Its function is as follows. Promotes the biosynthesis of heme as well as the assembly and repair of iron-sulfur clusters by delivering Fe(2+) to proteins involved in these pathways. May play a role in the protection against iron-catalyzed oxidative stress through its ability to catalyze the oxidation of Fe(2+) to Fe(3+). May be able to store large amounts of the metal in the form of a ferrihydrite mineral by oligomerization. Required for ecdysteroidogenesis in the prothoracic gland which is necessary for larval to pupal transition. This Drosophila melanogaster (Fruit fly) protein is Frataxin homolog, mitochondrial.